A 103-amino-acid chain; its full sequence is Large ribosomal subunit protein uL23 (103 aa).

This sequence belongs to the universal ribosomal protein uL23 family. As to quaternary structure, part of the 50S ribosomal subunit. Contacts protein L29, and trigger factor when it is bound to the ribosome.

One of the early assembly proteins it binds 23S rRNA. One of the proteins that surrounds the polypeptide exit tunnel on the outside of the ribosome. Forms the main docking site for trigger factor binding to the ribosome. The polypeptide is Large ribosomal subunit protein uL23 (Chlorobium phaeobacteroides (strain DSM 266 / SMG 266 / 2430)).